Here is a 446-residue protein sequence, read N- to C-terminus: Sensor-type histidine kinase PrrB (446 aa).

2 helical membrane passes run 19-39 (VVATAIGAAIPVLIVGTVVWV) and 151-171 (LLICGFAIAAAAVFAWLLAAF). The HAMP domain occupies 172–222 (AVRPFKQLAQQTRSVDAGGEAPRVEVHGATEAVEIAEAMRGMLQRIWNEQN). A Histidine kinase domain is found at 237–446 (VSSHELRTPL…RLLLRISAPS (210 aa)). The residue at position 240 (histidine 240) is a Phosphohistidine; by autocatalysis.

In terms of processing, autophosphorylated.

The protein resides in the cell membrane. It catalyses the reaction ATP + protein L-histidine = ADP + protein N-phospho-L-histidine.. Functionally, member of the two-component regulatory system PrrB/PrrA that is involved specifically in early intracellular multiplication of Mycobacterium and is essential for its viability. Functions as a sensor protein kinase which is autophosphorylated at a histidine residue and transfers its phosphate group to the conserved aspartic acid residue in the regulatory domain of PrrA. In turn, PrrA binds to the upstream promoter regions of target genes including itself to positively regulate their expression. The chain is Sensor-type histidine kinase PrrB (prrB) from Mycobacterium leprae (strain TN).